Reading from the N-terminus, the 120-residue chain is NAD(P)H-quinone oxidoreductase subunit 3, chloroplastic (120 aa).

3 helical membrane passes run 7 to 27, 64 to 84, and 89 to 109; these read YQTFWVFIMISSLIPLLALLI, SFALVFVIFDVETVFLYPWAM, and LGIFAFIEALIFVFILIIGLV.

It belongs to the complex I subunit 3 family. As to quaternary structure, NDH is composed of at least 16 different subunits, 5 of which are encoded in the nucleus.

It localises to the plastid. It is found in the chloroplast thylakoid membrane. The catalysed reaction is a plastoquinone + NADH + (n+1) H(+)(in) = a plastoquinol + NAD(+) + n H(+)(out). It catalyses the reaction a plastoquinone + NADPH + (n+1) H(+)(in) = a plastoquinol + NADP(+) + n H(+)(out). In terms of biological role, NDH shuttles electrons from NAD(P)H:plastoquinone, via FMN and iron-sulfur (Fe-S) centers, to quinones in the photosynthetic chain and possibly in a chloroplast respiratory chain. The immediate electron acceptor for the enzyme in this species is believed to be plastoquinone. Couples the redox reaction to proton translocation, and thus conserves the redox energy in a proton gradient. This chain is NAD(P)H-quinone oxidoreductase subunit 3, chloroplastic, found in Psilotum nudum (Whisk fern).